Consider the following 242-residue polypeptide: Probable 2-phosphosulfolactate phosphatase (242 aa).

This sequence belongs to the ComB family. It depends on Mg(2+) as a cofactor.

It catalyses the reaction (2R)-O-phospho-3-sulfolactate + H2O = (2R)-3-sulfolactate + phosphate. The chain is Probable 2-phosphosulfolactate phosphatase from Prochlorococcus marinus (strain NATL1A).